The sequence spans 142 residues: Deoxyuridine 5'-triphosphate nucleotidohydrolase (142 aa).

Substrate-binding positions include Arg-62–Gly-64, Asn-75, and Thr-79–Asp-81.

This sequence belongs to the dUTPase family. Mg(2+) is required as a cofactor.

It catalyses the reaction dUTP + H2O = dUMP + diphosphate + H(+). Its pathway is pyrimidine metabolism; dUMP biosynthesis; dUMP from dCTP (dUTP route): step 2/2. Functionally, this enzyme is involved in nucleotide metabolism: it produces dUMP, the immediate precursor of thymidine nucleotides and it decreases the intracellular concentration of dUTP so that uracil cannot be incorporated into DNA. The sequence is that of Deoxyuridine 5'-triphosphate nucleotidohydrolase from Clostridium novyi (strain NT).